The chain runs to 1062 residues: Valine--tRNA ligase, mitochondrial (1062 aa).

The N-terminal 15 residues, 1–15 (MPHLPLASFRPPLRG), are a transit peptide targeting the mitochondrion. The segment at 1 to 73 (MPHLPLASFR…AKGKPPAEST (73 aa)) is disordered. Basic and acidic residues predominate over residues 42–56 (RNREAKQKRLREKQA). The 'HIGH' region signature appears at 146 to 156 (PNVTGSLHIGH). A 'KMSKS' region motif is present at residues 659 to 663 (KMSKS). Lys662 lines the ATP pocket.

It belongs to the class-I aminoacyl-tRNA synthetase family.

The protein localises to the mitochondrion. The catalysed reaction is tRNA(Val) + L-valine + ATP = L-valyl-tRNA(Val) + AMP + diphosphate. Functionally, catalyzes the attachment of valine to tRNA(Val) in a two-step reaction: valine is first activated by ATP to form Val-AMP and then transferred to the acceptor end of tRNA(Val). This is Valine--tRNA ligase, mitochondrial (VARS2) from Sus scrofa (Pig).